The following is a 304-amino-acid chain: MQKYDIKTFQGMILALQDYWAQNGCTIVQPLDMEVGAGTSHPMTCLRALGPEPMSTAYVQPSRRPTDGRYGENPNRLQHYYQFQVALKPSPDNIQELYLGSLEVLGVDPLVHDIRFVEDNWENPTLGAWGLGWEVWLNGMEVTQFTYFQQVGGLECKPVTGEITYGIERLAMYIQEVDSVYDLVWNVAPDGSNVTYGDIFHQNEVEQSTYNFEHADVDFLFTFFDQCEKECKELLELEKPLPLPAYERILKAGHAFNILDARKAISVTERQRYILRIRNLTKAVAEAYYASREALGFPMCKKDK.

Belongs to the class-II aminoacyl-tRNA synthetase family. Tetramer of two alpha and two beta subunits.

It localises to the cytoplasm. It carries out the reaction tRNA(Gly) + glycine + ATP = glycyl-tRNA(Gly) + AMP + diphosphate. This chain is Glycine--tRNA ligase alpha subunit, found in Vibrio atlanticus (strain LGP32) (Vibrio splendidus (strain Mel32)).